Consider the following 60-residue polypeptide: Large ribosomal subunit protein uL30 (60 aa).

This sequence belongs to the universal ribosomal protein uL30 family. As to quaternary structure, part of the 50S ribosomal subunit.

The chain is Large ribosomal subunit protein uL30 from Shewanella sp. (strain MR-7).